Reading from the N-terminus, the 356-residue chain is Nicotinate-nucleotide--dimethylbenzimidazole phosphoribosyltransferase (356 aa).

Catalysis depends on Glu317, which acts as the Proton acceptor.

This sequence belongs to the CobT family. In terms of assembly, homodimer.

It carries out the reaction 5,6-dimethylbenzimidazole + nicotinate beta-D-ribonucleotide = alpha-ribazole 5'-phosphate + nicotinate + H(+). It functions in the pathway nucleoside biosynthesis; alpha-ribazole biosynthesis; alpha-ribazole from 5,6-dimethylbenzimidazole: step 1/2. Functionally, catalyzes the synthesis of alpha-ribazole-5'-phosphate from nicotinate mononucleotide (NAMN) and 5,6-dimethylbenzimidazole (DMB). This is Nicotinate-nucleotide--dimethylbenzimidazole phosphoribosyltransferase from Salmonella paratyphi A (strain ATCC 9150 / SARB42).